The primary structure comprises 343 residues: Ion-translocating oxidoreductase complex subunit D (343 aa).

4 helical membrane passes run 24–44 (VLLA…AGTL), 45–65 (YNLA…LAAR), 69–91 (LAFF…ALPP), and 124–144 (AMLG…SWPA). Thr171 is subject to FMN phosphoryl threonine. Helical transmembrane passes span 197–217 (FGGA…LYLL), 221–241 (LITW…SLLF), 251–271 (GSPL…FIVT), 284–304 (LVFG…GGYP), and 305–325 (DAVA…DYYT).

The protein belongs to the NqrB/RnfD family. The complex is composed of six subunits: RnfA, RnfB, RnfC, RnfD, RnfE and RnfG. FMN serves as cofactor.

The protein resides in the cell inner membrane. Functionally, part of a membrane-bound complex that couples electron transfer with translocation of ions across the membrane. The polypeptide is Ion-translocating oxidoreductase complex subunit D (Ectopseudomonas mendocina (strain ymp) (Pseudomonas mendocina)).